Here is a 426-residue protein sequence, read N- to C-terminus: Pannexin-1 (426 aa).

Over 1 to 40 the chain is Cytoplasmic; sequence MAIAHLATEYVFSDFLLKEPTEPKFKGLRLELAVDKMVTC. Residue Cys-40 is modified to S-nitrosocysteine. The helical transmembrane segment at 41–61 threads the bilayer; that stretch reads IAVGLPLLLISLAFAQEISIG. Residues 62-106 lie on the Extracellular side of the membrane; sequence TQISCFSPSSFSWRQAAFVDSYCWAAVQQKNSLQSESGNLPLWLH. Disulfide bonds link Cys-66/Cys-264 and Cys-84/Cys-245. The chain crosses the membrane as a helical span at residues 107–127; it reads KFFPYILLLFAILLYLPALFW. The Cytoplasmic portion of the chain corresponds to 128–216; it reads RFAAAPHLCS…HLIMKYISCR (89 aa). Tyr-198 bears the Phosphotyrosine mark. Residues 217–237 traverse the membrane as a helical segment; the sequence is LVTFAVVLLACIYLSYYFSLS. Topologically, residues 238–277 are extracellular; sequence SLSDEFLCSIKSGVLRNDSTIPDSFQCKLIAVGIFQLLSL. Asn-254 carries N-linked (GlcNAc...) asparagine glycosylation. The chain crosses the membrane as a helical span at residues 278–298; that stretch reads INLLVYALLVPVVIYTLFVPF. Residues 299-426 are Cytoplasmic-facing; it reads RQKTDVLKVY…SRQRLLNSSC (128 aa). Cys-346 is modified (S-nitrosocysteine). Residues 407–426 are disordered; the sequence is ETAANNGEKNSRQRLLNSSC.

Belongs to the pannexin family. As to quaternary structure, homoheptameric. Post-translationally, S-nitrosylation inhibits channel currents and ATP release. N-glycosylation plays a role in cell surface targeting. Glycosylation at its extracellular surface makes unlikely that two oligomers could dock to form an intercellular channel such as in gap junctions. Exists in three glycosylation states: non-glycosylated (GLY0), high-mannose glycosylated (GLY1), and fully mature glycosylated (GLY2). In terms of processing, cleaved by CASP3 and CASP7 during apoptosis. Cleavage opens the channel for the release of metabolites and induces plasma membrane permeability during apoptosis. Post-translationally, phosphorylated at Tyr-198 by SRC. Phosphorylation activates ATP release. Constitutively phosphorylated in vascular smooth muscle cells. As to expression, expressed in the eye, thyroid, prostate, kidney and liver. Abundantly expressed in the CNS, including hippocampus, olfactory bulb, cortex, cerebellum and white matter.

It is found in the cell membrane. Its subcellular location is the endoplasmic reticulum membrane. It carries out the reaction Ca(2+)(in) = Ca(2+)(out). It catalyses the reaction ATP(in) = ATP(out). The catalysed reaction is K(+)(in) = K(+)(out). The enzyme catalyses chloride(in) = chloride(out). It carries out the reaction iodide(out) = iodide(in). It catalyses the reaction Na(+)(in) = Na(+)(out). The catalysed reaction is nitrate(in) = nitrate(out). The enzyme catalyses L-aspartate(out) = L-aspartate(in). It carries out the reaction L-glutamate(out) = L-glutamate(in). It catalyses the reaction D-gluconate(in) = D-gluconate(out). The catalysed reaction is spermidine(in) = spermidine(out). Ion channel involved in a variety of physiological functions such as blood pressure regulation, apoptotic cell clearance and oogenesis. Forms anion-selective channels with relatively low conductance and an order of permeabilities: nitrate&gt;iodide&gt;chlroride&gt;&gt;aspartate=glutamate=gluconate. Can release ATP upon activation through phosphorylation or cleavage at C-terminus. May play a role as a Ca(2+)-leak channel to regulate ER Ca(2+) homeostasis. Functionally, during apoptosis, the C terminal tail is cleaved by caspases, which opens the main pore acting as a large-pore ATP efflux channel with a broad distribution, which allows the regulated release of molecules and ions smaller than 1 kDa, such as nucleotides ATP and UTP, and selective plasma membrane permeability to attract phagocytes that engulf the dying cells. The chain is Pannexin-1 (Panx1) from Rattus norvegicus (Rat).